The following is a 224-amino-acid chain: Histone H1.03 (224 aa).

2 stretches are compositionally biased toward low complexity: residues M1–A22 and A30–P42. 2 disordered regions span residues M1–S43 and Q99–K224. The 74-residue stretch at A40–K113 folds into the H15 domain. 4 stretches are compositionally biased toward basic residues: residues A122–A137, K145–K162, K170–V188, and K197–K224.

It belongs to the histone H1/H5 family.

The protein localises to the nucleus. The protein resides in the chromosome. Histones H1 are necessary for the condensation of nucleosome chains into higher-order structures. The polypeptide is Histone H1.03 (Gallus gallus (Chicken)).